Reading from the N-terminus, the 201-residue chain is Cytochrome c oxidase assembly protein CtaG (201 aa).

Residues 1–13 (MTDQGENEKKQRR) lie on the Cytoplasmic side of the membrane. The chain crosses the membrane as a helical; Signal-anchor for type II membrane protein span at residues 14 to 36 (SNATIAVACLSFFVCMIGAAYAS). Residues 37–201 (VPLYRIFCQV…KAVGSTRNGG (165 aa)) lie on the Periplasmic side of the membrane.

This sequence belongs to the COX11/CtaG family.

The protein localises to the cell inner membrane. Exerts its effect at some terminal stage of cytochrome c oxidase synthesis, probably by being involved in the insertion of the copper B into subunit I. This is Cytochrome c oxidase assembly protein CtaG from Brucella ovis (strain ATCC 25840 / 63/290 / NCTC 10512).